We begin with the raw amino-acid sequence, 386 residues long: Alanine racemase (386 aa).

Lys-48 functions as the Proton acceptor; specific for D-alanine in the catalytic mechanism. At Lys-48 the chain carries N6-(pyridoxal phosphate)lysine. Substrate is bound at residue Arg-149. Tyr-278 acts as the Proton acceptor; specific for L-alanine in catalysis. Residue Met-326 participates in substrate binding.

Belongs to the alanine racemase family. Requires pyridoxal 5'-phosphate as cofactor.

The enzyme catalyses L-alanine = D-alanine. It participates in amino-acid biosynthesis; D-alanine biosynthesis; D-alanine from L-alanine: step 1/1. Functionally, catalyzes the interconversion of L-alanine and D-alanine. May also act on other amino acids. In Nostoc sp. (strain PCC 7120 / SAG 25.82 / UTEX 2576), this protein is Alanine racemase (alr).